We begin with the raw amino-acid sequence, 87 residues long: Small ribosomal subunit protein eS21 (87 aa).

It belongs to the eukaryotic ribosomal protein eS21 family. In terms of assembly, component of the small ribosomal subunit. Mature ribosomes consist of a small (40S) and a large (60S) subunit. The 40S subunit contains about 33 different proteins and 1 molecule of RNA (18S). The 60S subunit contains about 49 different proteins and 3 molecules of RNA (25S, 5.8S and 5S).

It localises to the cytoplasm. Its function is as follows. Required for the processing of the 20S rRNA-precursor to mature 18S rRNA in a late step of the maturation of 40S ribosomal subunits. Has a physiological role leading to 18S rRNA stability. The sequence is that of Small ribosomal subunit protein eS21 (RPS21) from Candida glabrata (strain ATCC 2001 / BCRC 20586 / JCM 3761 / NBRC 0622 / NRRL Y-65 / CBS 138) (Yeast).